We begin with the raw amino-acid sequence, 429 residues long: 3-phosphoshikimate 1-carboxyvinyltransferase (429 aa).

Residues Lys-11, Ser-12, and Arg-16 each coordinate 3-phosphoshikimate. Position 11 (Lys-11) interacts with phosphoenolpyruvate. The phosphoenolpyruvate site is built by Gly-82 and Arg-110. Ser-155, Gln-157, Asp-302, and Lys-329 together coordinate 3-phosphoshikimate. Gln-157 is a binding site for phosphoenolpyruvate. Residue Asp-302 is the Proton acceptor of the active site. Residues Arg-333 and Arg-385 each contribute to the phosphoenolpyruvate site.

The protein belongs to the EPSP synthase family. As to quaternary structure, monomer.

The protein resides in the cytoplasm. It catalyses the reaction 3-phosphoshikimate + phosphoenolpyruvate = 5-O-(1-carboxyvinyl)-3-phosphoshikimate + phosphate. The protein operates within metabolic intermediate biosynthesis; chorismate biosynthesis; chorismate from D-erythrose 4-phosphate and phosphoenolpyruvate: step 6/7. Functionally, catalyzes the transfer of the enolpyruvyl moiety of phosphoenolpyruvate (PEP) to the 5-hydroxyl of shikimate-3-phosphate (S3P) to produce enolpyruvyl shikimate-3-phosphate and inorganic phosphate. This Helicobacter pylori (strain Shi470) protein is 3-phosphoshikimate 1-carboxyvinyltransferase.